Consider the following 98-residue polypeptide: Flagellar hook-basal body complex protein FliE (98 aa).

Positions 1 to 23 (MNNINDLRLNNNISNTNKSQNST) are enriched in low complexity. Positions 1-24 (MNNINDLRLNNNISNTNKSQNSTG) are disordered.

The protein belongs to the FliE family.

Its subcellular location is the bacterial flagellum basal body. The chain is Flagellar hook-basal body complex protein FliE from Campylobacter jejuni subsp. jejuni serotype O:2 (strain ATCC 700819 / NCTC 11168).